A 219-amino-acid chain; its full sequence is Ras-related protein Rab-3B (219 aa).

An N-acetylalanine modification is found at A2. S31, S32, V33, G34, K35, T36, S37, P49, and S53 together coordinate GTP. A Mg(2+)-binding site is contributed by T36. The short motif at 45–58 is the Switch 1 element; the sequence is DTFTPAFVSTVGID. Mg(2+) contacts are provided by T54 and D77. Positions 78–96 match the Switch 2 motif; sequence TAGQERYRTITTAYYRGAM. G80 is a binding site for GTP. The residue at position 86 (T86) is a Phosphothreonine; by LRRK2. Residues N135, K136, D138, A166, and K167 each contribute to the GTP site. 2 positions are modified to phosphoserine: S188 and S190. Residues C217 and C219 are each lipidated (S-geranylgeranyl cysteine). At C219 the chain carries Cysteine methyl ester.

The protein belongs to the small GTPase superfamily. Rab family. Interacts with RIMS1, RIMS2, RPH3A and RPH3AL. The GTP-bound form interacts with GAS8/DRC4 (via coiled-coil domains). Interacts with GDI2, CHM and CHML; phosphorylation at Thr-86 disrupts these interactions. Interacts with MADD (via uDENN domain); the GTP-bound form is preferred for interaction. Requires Mg(2+) as cofactor. Phosphorylation of Thr-86 in the switch II region by LRRK2 prevents the association of RAB regulatory proteins, including CHM, CHML and RAB GDP dissociation inhibitor GDI2. In terms of tissue distribution, abundantly expressed in testis, lung and brain.

Its subcellular location is the cell membrane. It is found in the golgi apparatus. The catalysed reaction is GTP + H2O = GDP + phosphate + H(+). With respect to regulation, regulated by guanine nucleotide exchange factors (GEFs) which promote the exchange of bound GDP for free GTP. Regulated by GTPase activating proteins (GAPs) which increase the GTP hydrolysis activity. Inhibited by GDP dissociation inhibitors (GDIs) which prevent Rab-GDP dissociation. In terms of biological role, the small GTPases Rab are key regulators of intracellular membrane trafficking, from the formation of transport vesicles to their fusion with membranes. Rabs cycle between an inactive GDP-bound form and an active GTP-bound form that is able to recruit to membranes different sets of downstream effectors directly responsible for vesicle formation, movement, tethering and fusion. The sequence is that of Ras-related protein Rab-3B from Mus musculus (Mouse).